The chain runs to 67 residues: UPF0337 protein CC_0938 (67 aa).

The disordered stretch occupies residues 37–67 (AAQKAKGDLQNKVGKAQDKARRRDQALNARL). The span at 41–61 (AKGDLQNKVGKAQDKARRRDQ) shows a compositional bias: basic and acidic residues.

This sequence belongs to the UPF0337 (CsbD) family.

This is UPF0337 protein CC_0938 from Caulobacter vibrioides (strain ATCC 19089 / CIP 103742 / CB 15) (Caulobacter crescentus).